The chain runs to 139 residues: Actin-depolymerizing factor 9 (139 aa).

The region spanning 7–139 (GLAVNDECKF…SLDIIRARAH (133 aa)) is the ADF-H domain.

The protein belongs to the actin-binding proteins ADF family.

Functionally, actin-depolymerizing protein. Severs actin filaments (F-actin) and binds to actin monomers. This chain is Actin-depolymerizing factor 9 (ADF9), found in Oryza sativa subsp. japonica (Rice).